The primary structure comprises 330 residues: D-lactate dehydrogenase (330 aa).

NAD(+) is bound by residues 155–156, Asp175, 206–207, Asn212, 233–235, and Asp259; these read RI, MP, and MAR. The active site involves Arg235. Residue Glu264 is part of the active site. The active-site Proton donor is His296.

This sequence belongs to the D-isomer specific 2-hydroxyacid dehydrogenase family.

The enzyme catalyses (R)-lactate + NAD(+) = pyruvate + NADH + H(+). This chain is D-lactate dehydrogenase (ldhD), found in Streptococcus agalactiae serotype V (strain ATCC BAA-611 / 2603 V/R).